The sequence spans 308 residues: Homoserine kinase (308 aa).

Position 94–104 (94–104) interacts with ATP; that stretch reads PLARGLGSSAT.

The protein belongs to the GHMP kinase family. Homoserine kinase subfamily.

It is found in the cytoplasm. The enzyme catalyses L-homoserine + ATP = O-phospho-L-homoserine + ADP + H(+). It participates in amino-acid biosynthesis; L-threonine biosynthesis; L-threonine from L-aspartate: step 4/5. In terms of biological role, catalyzes the ATP-dependent phosphorylation of L-homoserine to L-homoserine phosphate. This is Homoserine kinase from Crocosphaera subtropica (strain ATCC 51142 / BH68) (Cyanothece sp. (strain ATCC 51142)).